The primary structure comprises 838 residues: Polyribonucleotide nucleotidyltransferase (838 aa).

Residues Asp-494 and Asp-500 each coordinate Mg(2+). Residues 561 to 620 (PRMESMLIDKGKIKNVIGAGGKNVREICEKTGAKIEISQDGTVMIYAVGREAIESAKDMI) form the KH domain. The S1 motif domain occupies 630 to 697 (GKIYSGEVCE…DKDHIQLSMR (68 aa)). Residues 747-757 (GGASAGRNGRG) are compositionally biased toward gly residues. Positions 747-838 (GGASAGRNGR…PAAPKKPRFF (92 aa)) are disordered. A compositionally biased stretch (low complexity) spans 788–810 (AGSSGYSSDSSSGNTKSSSSESS). Residues 811 to 820 (GGTGGRGRNG) show a composition bias toward gly residues.

It belongs to the polyribonucleotide nucleotidyltransferase family. Mg(2+) serves as cofactor.

It localises to the cytoplasm. It carries out the reaction RNA(n+1) + phosphate = RNA(n) + a ribonucleoside 5'-diphosphate. Functionally, involved in mRNA degradation. Catalyzes the phosphorolysis of single-stranded polyribonucleotides processively in the 3'- to 5'-direction. The chain is Polyribonucleotide nucleotidyltransferase from Anaplasma phagocytophilum (strain HZ).